An 85-amino-acid chain; its full sequence is MKVTLIAILTCAAVLVLRTTAAEELEAESQLMEVGMPDTELAAVDEERLFECSVSCEIEKEGNKDCKKKKCKGGWKCKFNMCVKV.

Positions 1 to 22 (MKVTLIAILTCAAVLVLRTTAA) are cleaved as a signal peptide. Residues 23 to 48 (EELEAESQLMEVGMPDTELAAVDEER) constitute a propeptide that is removed on maturation. Intrachain disulfides connect Cys-52–Cys-66, Cys-56–Cys-77, and Cys-71–Cys-82.

This sequence belongs to the neurotoxin 12 (Hwtx-2) family. 02 (Hwtx-2) subfamily. Monomer. Expressed by the venom gland.

Its subcellular location is the secreted. Neurotoxin active on both insects and mammals. This is U4-theraphotoxin-Hhn1a from Cyriopagopus hainanus (Chinese bird spider).